The primary structure comprises 97 residues: Small ribosomal subunit protein uS17 (97 aa).

The segment at 1–20 (MSEATVNDNAAVKNEKGARK) is disordered.

It belongs to the universal ribosomal protein uS17 family. In terms of assembly, part of the 30S ribosomal subunit.

One of the primary rRNA binding proteins, it binds specifically to the 5'-end of 16S ribosomal RNA. The sequence is that of Small ribosomal subunit protein uS17 from Corynebacterium jeikeium (strain K411).